We begin with the raw amino-acid sequence, 273 residues long: NH(3)-dependent NAD(+) synthetase (273 aa).

47–54 contacts ATP; sequence GISGGQDS. Aspartate 53 is a Mg(2+) binding site. Arginine 139 serves as a coordination point for deamido-NAD(+). An ATP-binding site is contributed by threonine 159. Position 164 (glutamate 164) interacts with Mg(2+). Residues lysine 172 and aspartate 179 each contribute to the deamido-NAD(+) site. Lysine 188 and threonine 210 together coordinate ATP. 259–260 is a binding site for deamido-NAD(+); the sequence is HK.

This sequence belongs to the NAD synthetase family. In terms of assembly, homodimer.

It carries out the reaction deamido-NAD(+) + NH4(+) + ATP = AMP + diphosphate + NAD(+) + H(+). It participates in cofactor biosynthesis; NAD(+) biosynthesis; NAD(+) from deamido-NAD(+) (ammonia route): step 1/1. In terms of biological role, catalyzes the ATP-dependent amidation of deamido-NAD to form NAD. Uses ammonia as a nitrogen source. This is NH(3)-dependent NAD(+) synthetase from Staphylococcus aureus (strain COL).